The primary structure comprises 497 residues: Probable gamma-aminobutyrate transaminase 2, mitochondrial (497 aa).

The transit peptide at 1-37 directs the protein to the mitochondrion; sequence MNLIKHAAFAASFQGETDCTSHASARKFSTSGSSPLL. 153-154 is a binding site for pyridoxal 5'-phosphate; that stretch reads GS. Tyrosine 186 provides a ligand contact to substrate. Aspartate 293 contributes to the pyridoxal 5'-phosphate binding site. Lysine 322 provides a ligand contact to substrate. Position 322 is an N6-(pyridoxal phosphate)lysine (lysine 322).

Belongs to the class-III pyridoxal-phosphate-dependent aminotransferase family.

The protein resides in the mitochondrion. It catalyses the reaction 4-aminobutanoate + pyruvate = succinate semialdehyde + L-alanine. The catalysed reaction is 4-aminobutanoate + glyoxylate = succinate semialdehyde + glycine. Its function is as follows. Transaminase that degrades gamma-amino butyric acid (GABA). In Oryza sativa subsp. indica (Rice), this protein is Probable gamma-aminobutyrate transaminase 2, mitochondrial.